The primary structure comprises 747 residues: Threonine synthase-like 1 (747 aa).

Lys-351 is subject to N6-(pyridoxal phosphate)lysine.

Belongs to the threonine synthase family. It depends on pyridoxal 5'-phosphate as a cofactor.

This is Threonine synthase-like 1 (Thnsl1) from Mus musculus (Mouse).